Consider the following 495-residue polypeptide: Glycerol kinase (495 aa).

Threonine 11 contributes to the ADP binding site. The ATP site is built by threonine 11, threonine 12, and serine 13. Threonine 11 provides a ligand contact to sn-glycerol 3-phosphate. Arginine 81, glutamate 82, tyrosine 133, and aspartate 242 together coordinate sn-glycerol 3-phosphate. Arginine 81, glutamate 82, tyrosine 133, aspartate 242, and glutamine 243 together coordinate glycerol. Positions 264, 307, 407, and 411 each coordinate ADP. Residues threonine 264, glycine 307, and glycine 407 each coordinate ATP.

The protein belongs to the FGGY kinase family.

The enzyme catalyses glycerol + ATP = sn-glycerol 3-phosphate + ADP + H(+). The protein operates within polyol metabolism; glycerol degradation via glycerol kinase pathway; sn-glycerol 3-phosphate from glycerol: step 1/1. Its activity is regulated as follows. Inhibited by fructose 1,6-bisphosphate (FBP). Key enzyme in the regulation of glycerol uptake and metabolism. Catalyzes the phosphorylation of glycerol to yield sn-glycerol 3-phosphate. This chain is Glycerol kinase, found in Thermus brockianus.